The primary structure comprises 178 residues: Protein GrpE (178 aa).

This sequence belongs to the GrpE family. Homodimer.

Its subcellular location is the cytoplasm. In terms of biological role, participates actively in the response to hyperosmotic and heat shock by preventing the aggregation of stress-denatured proteins, in association with DnaK and GrpE. It is the nucleotide exchange factor for DnaK and may function as a thermosensor. Unfolded proteins bind initially to DnaJ; upon interaction with the DnaJ-bound protein, DnaK hydrolyzes its bound ATP, resulting in the formation of a stable complex. GrpE releases ADP from DnaK; ATP binding to DnaK triggers the release of the substrate protein, thus completing the reaction cycle. Several rounds of ATP-dependent interactions between DnaJ, DnaK and GrpE are required for fully efficient folding. This is Protein GrpE from Rickettsia africae (strain ESF-5).